The chain runs to 268 residues: Expansin-B3 (268 aa).

A signal peptide spans 1 to 25 (MAFSISKKAAVAALFSFLVVTCVAG). An N-linked (GlcNAc...) asparagine glycan is attached at asparagine 30. The region spanning 62 to 168 (GGACGFKNTN…KRVPCNFPGL (107 aa)) is the Expansin-like EG45 domain. 3 disulfides stabilise this stretch: cysteine 65–cysteine 93, cysteine 96–cysteine 163, and cysteine 101–cysteine 107. The Expansin-like CBD domain maps to 181 to 262 (VYFAVLVEYE…NWAPMAVYRS (82 aa)). Asparagine 238 is a glycosylation site (N-linked (GlcNAc...) asparagine).

Belongs to the expansin family. Expansin B subfamily. Expressed in roots, coleoptiles and internodes.

It is found in the secreted. The protein resides in the cell wall. It localises to the membrane. Its function is as follows. May cause loosening and extension of plant cell walls by disrupting non-covalent bonding between cellulose microfibrils and matrix glucans. No enzymatic activity has been found. May be required for rapid internodal elongation in deepwater rice during submergence. This is Expansin-B3 (EXPB3) from Oryza sativa subsp. japonica (Rice).